Consider the following 310-residue polypeptide: Ribosomal protein L11 methyltransferase (310 aa).

S-adenosyl-L-methionine-binding residues include T153, G174, D196, and N239.

Belongs to the methyltransferase superfamily. PrmA family.

It is found in the cytoplasm. The catalysed reaction is L-lysyl-[protein] + 3 S-adenosyl-L-methionine = N(6),N(6),N(6)-trimethyl-L-lysyl-[protein] + 3 S-adenosyl-L-homocysteine + 3 H(+). Functionally, methylates ribosomal protein L11. In Janthinobacterium sp. (strain Marseille) (Minibacterium massiliensis), this protein is Ribosomal protein L11 methyltransferase.